The chain runs to 476 residues: Neuropeptide-like precursor 1 (476 aa).

An N-terminal signal peptide occupies residues Met-1–Ser-34. The residue at position 133 (Val-133) is a Valine amide. 2 consecutive propeptides follow at residues Asp-160–Phe-232 and Tyr-259–Gln-476. Disordered regions lie at residues Gln-275–Val-298 and Pro-360–Thr-385. Residues Asp-286–Glu-297 are compositionally biased toward acidic residues.

Neuropeptide-like precursor 1-1: Expressed in antennal lobe (AL), corpora cardiaca (CC), corpora allata (CA) and gnathal ganglion (GNG) (at protein level). Expression in AL detected in all animals, in GNG in most animals, expression in CC and CA in few animals (at protein level). Neuropeptide-like precursor 1-2: Expressed in antennal lobe (AL), corpora cardiaca (CC), corpora allata (CA) and gnathal ganglion (GNG) (at protein level). Expression in AL detected in all animals, in GNG in some animals, expression in CC and CA in few animals (at protein level). Neuropeptide-like precursor 1-3: Not expressed in antennal lobe (AL), corpora cardiaca (CC), corpora allata (CA) and gnathal ganglion (GNG) (at protein level). Neuropeptide-like precursor 1-4: Expressed in antennal lobe (AL) and gnathal ganglion (GNG) (at protein level). Expression in AL detected in most animals, in GNG in some animals (at protein level). Not expressed in CC and CA (at protein level). YRVamide: Expressed in antennal lobe (AL), corpora cardiaca (CC), corpora allata (CA) and gnathal ganglion (GNG) (at protein level). Expression in AL and GNG detected in most animals, expression in CC and CA in few animals (at protein level). Extended YRVamide: Expressed in antennal lobe (AL) and gnathal ganglion (GNG) (at protein level). Expression in AL detected in most animals, in GNG in some animals (at protein level). Not expressed in corpora cardiaca (CC) and corpora allata (CA) (at protein level). Neuropeptide-like precursor 1-6: Expressed in antennal lobe (AL), corpora cardiaca (CC), corpora allata (CA) and gnathal ganglion (GNG) (at protein level). Expression in GNG detected in all animals, expression in AL in most animals, in CC and CA in few animals (at protein level). Neuropeptide-like precursor 1-6(1-11): Expressed in antennal lobe (AL) and gnathal ganglion (GNG) in most animals (at protein level). Not expressed in corpora cardiaca (CC) and corpora allata (CA) (at protein level). Neuropeptide-like precursor 1-9: Expressed in antennal lobe (AL) and gnathal ganglion (GNG) (at protein level). Expression in AL detected in all animals in GNG in most (at protein level). Not expressed in corpora cardiaca (CC) and corpora allata (CA) (at protein level).

The protein resides in the secreted. This Agrotis ipsilon (Black cutworm moth) protein is Neuropeptide-like precursor 1.